The following is a 235-amino-acid chain: MPKRGKNYSNKSQSFDKQQVYTLEEAVGHVLATSYAKFDETFDIAIKLGVDPRHADQMIRSSVVLPHGTGKVTRVLVFAKGAKEAEAREAGADFVGGDDLVEKIQGGWLEFDKTVATPDMMGTVGKIGRVLGPRNLMPNAKLGTVTFDVAKVIEEIKSGKVDFKVEKAGILHAGIGKISFGNEKLTANALAFIEKIIQLKPSSSKGVYLKSVTISSTMGPGVKVDPVYLRALVKK.

Belongs to the universal ribosomal protein uL1 family. In terms of assembly, part of the 50S ribosomal subunit.

Functionally, binds directly to 23S rRNA. The L1 stalk is quite mobile in the ribosome, and is involved in E site tRNA release. In terms of biological role, protein L1 is also a translational repressor protein, it controls the translation of the L11 operon by binding to its mRNA. In Desulfotalea psychrophila (strain LSv54 / DSM 12343), this protein is Large ribosomal subunit protein uL1.